We begin with the raw amino-acid sequence, 414 residues long: 5-aminolevulinate synthase (414 aa).

Substrate-binding residues include R22, S133, and K152. Pyridoxal 5'-phosphate-binding residues include S185, H213, and T241. The active site involves K244. Position 244 is an N6-(pyridoxal phosphate)lysine (K244). 2 residues coordinate pyridoxal 5'-phosphate: T273 and T274. T359 provides a ligand contact to substrate.

The protein belongs to the class-II pyridoxal-phosphate-dependent aminotransferase family. In terms of assembly, homodimer. Requires pyridoxal 5'-phosphate as cofactor.

The catalysed reaction is succinyl-CoA + glycine + H(+) = 5-aminolevulinate + CO2 + CoA. It functions in the pathway porphyrin-containing compound metabolism; protoporphyrin-IX biosynthesis; 5-aminolevulinate from glycine: step 1/1. In Rickettsia conorii (strain ATCC VR-613 / Malish 7), this protein is 5-aminolevulinate synthase (hemA).